Consider the following 459-residue polypeptide: MKNISDYRNKKVLVLGLAKSGVNAARLLHKLGALVTVNDKQQFDDNKDAQELLADGMRVITGRHPVELLDEHFELMVKNPGIPYSNPMVKRAEALHMPIITEPELAYQVSEAQWIGITGTNGKTTTTTLIGLMLNQQRPHHAFDAGNIGIPVSQVAQKVGKDDTIVAELSSFQLCGIKTLHPHIAVLTNIYEAHLDWHGNRANYVAAKMRITMNQTPDDYFIMNWDLPEMHELAKQSKAQIVPFSRKNAEGARAQLIDGWLTFDGDRIMKASEMQIPGLHNIENALAAIAAVKLEGVGDDAIREVLRTFSGVKHRIQYLETIDGRRVYNDSKATNVEAATVALNAFDQPIVWLAGGLDRGLPMDALTPLVKKHVKSMVVFGQTAPLMAKIGKDAGVPVQTTENVMTAVPLAYEVSRPGDVILLSPAAASWDQYPNFEVRGDDFIKAVNQLKATVESGDK.

119–125 (GTNGKTT) serves as a coordination point for ATP.

The protein belongs to the MurCDEF family.

Its subcellular location is the cytoplasm. It carries out the reaction UDP-N-acetyl-alpha-D-muramoyl-L-alanine + D-glutamate + ATP = UDP-N-acetyl-alpha-D-muramoyl-L-alanyl-D-glutamate + ADP + phosphate + H(+). It functions in the pathway cell wall biogenesis; peptidoglycan biosynthesis. Functionally, cell wall formation. Catalyzes the addition of glutamate to the nucleotide precursor UDP-N-acetylmuramoyl-L-alanine (UMA). The polypeptide is UDP-N-acetylmuramoylalanine--D-glutamate ligase (Lacticaseibacillus casei (strain BL23) (Lactobacillus casei)).